The sequence spans 135 residues: Small ribosomal subunit protein bS18 (135 aa).

The segment at 1–65 is disordered; the sequence is MARPDMGGPK…GDEGGGRRGF (65 aa). The segment covering 9–41 has biased composition (gly residues); sequence PKMGGGFGGPRSGGFGGGGGGGGFGGGGFGGGR. Residues 42–61 are compositionally biased toward basic and acidic residues; the sequence is GGDRGDRGDRDDRGGDEGGG.

The protein belongs to the bacterial ribosomal protein bS18 family. As to quaternary structure, part of the 30S ribosomal subunit. Forms a tight heterodimer with protein bS6.

Binds as a heterodimer with protein bS6 to the central domain of the 16S rRNA, where it helps stabilize the platform of the 30S subunit. The protein is Small ribosomal subunit protein bS18 of Anaeromyxobacter dehalogenans (strain 2CP-C).